The chain runs to 213 residues: Ripening-related protein 3 (213 aa).

The first 32 residues, 1 to 32, serve as a signal peptide directing secretion; sequence MAGAMTMSRRRLSHALLLVLAILPNLAALAVA.

This sequence belongs to the kiwellin family.

It localises to the secreted. The chain is Ripening-related protein 3 from Oryza sativa subsp. japonica (Rice).